Reading from the N-terminus, the 1251-residue chain is Phospholipid-transporting ATPase IC (1251 aa).

The disordered stretch occupies residues methionine 1–asparagine 54. Topologically, residues methionine 1 to isoleucine 108 are cytoplasmic. Positions serine 25 to aspartate 35 are enriched in acidic residues. A compositionally biased stretch (basic and acidic residues) spans glutamate 43–asparagine 54. The chain crosses the membrane as a helical span at residues proline 109–leucine 130. Topologically, residues glutamine 131–isoleucine 136 are exoplasmic loop. Residues serine 137–alanine 156 traverse the membrane as a helical segment. The Cytoplasmic segment spans residues isoleucine 157–methionine 340. Residues valine 341–tryptophan 362 traverse the membrane as a helical segment. The Exoplasmic loop portion of the chain corresponds to glutamate 363–phenylalanine 389. A helical membrane pass occupies residues tryptophan 390–isoleucine 411. Residues arginine 412–lysine 949 lie on the Cytoplasmic side of the membrane. Aspartate 454 acts as the 4-aspartylphosphate intermediate in catalysis. Residues aspartate 454, lysine 455, threonine 456, glutamate 555, phenylalanine 596, lysine 619, arginine 652, threonine 732, glycine 733, aspartate 734, arginine 867, and lysine 873 each coordinate ATP. Aspartate 454 is a binding site for Mg(2+). Mg(2+) is bound at residue threonine 456. Aspartate 893 serves as a coordination point for Mg(2+). Positions 896 and 897 each coordinate ATP. Aspartate 897 is a binding site for Mg(2+). The chain crosses the membrane as a helical span at residues phenylalanine 950–phenylalanine 970. At phenylalanine 971–aspartate 982 the chain is on the exoplasmic loop side. Residues tryptophan 983–leucine 1002 form a helical membrane-spanning segment. Residues leucine 1003 to arginine 1032 lie on the Cytoplasmic side of the membrane. A helical transmembrane segment spans residues phenylalanine 1033 to alanine 1054. Over tyrosine 1055 to aspartate 1068 the chain is Exoplasmic loop. The helical transmembrane segment at tyrosine 1069 to aspartate 1091 threads the bilayer. Residues threonine 1092 to phenylalanine 1097 are Cytoplasmic-facing. Residues valine 1098–histidine 1118 traverse the membrane as a helical segment. The Exoplasmic loop portion of the chain corresponds to serine 1119–asparagine 1138. A helical membrane pass occupies residues alanine 1139–isoleucine 1163. The Cytoplasmic portion of the chain corresponds to arginine 1164–serine 1251. Serine 1223 carries the post-translational modification Phosphoserine.

It belongs to the cation transport ATPase (P-type) (TC 3.A.3) family. Type IV subfamily. Component of a P4-ATPase flippase complex which consists of a catalytic alpha subunit ATP8B1 and an accessory beta subunit TMEM30A. The flippase ATP8B1:TMEM30A complex can form an intermediate phosphoenzyme in vitro. Also interacts with beta subunit TMEM30B. The cofactor is Mg(2+). As to expression, found in most tissues except brain and skeletal muscle. Most abundant in pancreas and small intestine.

It localises to the cell membrane. Its subcellular location is the apical cell membrane. It is found in the cell projection. The protein localises to the stereocilium. The protein resides in the endoplasmic reticulum. It localises to the golgi apparatus. It catalyses the reaction ATP + H2O + phospholipidSide 1 = ADP + phosphate + phospholipidSide 2.. It carries out the reaction a 1,2-diacyl-sn-glycero-3-phosphocholine(out) + ATP + H2O = a 1,2-diacyl-sn-glycero-3-phosphocholine(in) + ADP + phosphate + H(+). The enzyme catalyses a 1,2-diacyl-sn-glycero-3-phospho-L-serine(out) + ATP + H2O = a 1,2-diacyl-sn-glycero-3-phospho-L-serine(in) + ADP + phosphate + H(+). Functionally, catalytic component of a P4-ATPase flippase complex which catalyzes the hydrolysis of ATP coupled to the transport of phospholipids, in particular phosphatidylcholines (PC), from the outer to the inner leaflet of the plasma membrane. May participate in the establishment of the canalicular membrane integrity by ensuring asymmetric distribution of phospholipids in the canicular membrane. Thus may have a role in the regulation of bile acids transport into the canaliculus, uptake of bile acids from intestinal contents into intestinal mucosa or both and protect hepatocytes from bile salts. Involved in the microvillus formation in polarized epithelial cells; the function seems to be independent from its flippase activity. Participates in correct apical membrane localization of CDC42, CFTR and SLC10A2. Enables CDC42 clustering at the apical membrane during enterocyte polarization through the interaction between CDC42 polybasic region and negatively charged membrane lipids provided by ATP8B1. Together with TMEM30A is involved in uptake of the synthetic drug alkylphospholipid perifosine. Required for the preservation of cochlear hair cells in the inner ear. May act as cardiolipin transporter during inflammatory injury. The polypeptide is Phospholipid-transporting ATPase IC (Homo sapiens (Human)).